A 359-amino-acid chain; its full sequence is MVSETVEANGPLYPDYLPFYDPLEKVEMVGPFEHDDPGHRADPSFPNLLEKATNVLELSPHCGTELQGVQISELSTQGLDELALMVAERGCLVFRDQDFTNLGFEKQKEIASHFGPLHKHGWMPHPKNGPEEFVIVYDSKDDLRIRKSWARKSPIQFHVDQSPESQPPGATFFCMLESPPGAGGDTVISNMARAFDRLSPSFRKRLEGLKAVHTTANPIMREIRDNGPDSVLRRPITRTIHPVVVVHPVTKRKALFVNSSYTQSIVGWDEEESDYMLKFLFDHINRGHDFCCRVRYEPGTVVIWDQRVTQHSQTLDYSAGSRRHAFRLTPLANVPIPSLIEEDDGECAKDEGRMLLNLC.

H120 is a substrate binding site. The Fe cation site is built by H158 and D160. T186 contacts 2-oxoglutarate. H311 is a binding site for Fe cation. 2 residues coordinate 2-oxoglutarate: R323 and R327. R327 provides a ligand contact to substrate.

Belongs to the TfdA dioxygenase family. Fe(2+) is required as a cofactor.

It participates in alkaloid biosynthesis. In terms of biological role, alpha-ketoglutarate-dependent dioxygenase; part of the gene cluster that mediates the biosynthesis of communesins, a prominent class of indole alkaloids with great potential as pharmaceuticals. Communesins are biosynthesized by the coupling of tryptamine and aurantioclavine, two building blocks derived from L-tryptophan. The L-tryptophan decarboxylase cnsB converts L-tryptophan to tryptamine, whereas the tryptophan dimethylallyltransferase cnsF converts L-tryptophan to 4-dimethylallyl tryptophan which is further transformed to aurantioclavine by the aurantioclavine synthase cnsA, probably aided by the catalase cnsD. The cytochrome P450 monooxygenase cnsC catalyzes the heterodimeric coupling between the two different indole moieties, tryptamine and aurantioclavine, to construct vicinal quaternary stereocenters and yield the heptacyclic communesin scaffold. The O-methyltransferase cnsE then methylates the communesin scaffold to produce communesin K, the simplest characterized communesin that contains the heptacyclic core. The dioxygenase cnsJ converts communesin K into communesin I. Acylation to introduce the hexadienyl group at position N16 of communesin I by the acyltransferase cnsK leads to the production of communesin B. The hexadienyl group is produced by the highly reducing polyketide synthase cnsI, before being hydrolytically removed from cnsI by the serine hydrolase cnsH, converted into hexadienyl-CoA by the CoA ligase cnsG, and then transferred to communesin I by cnsK. Surprisingly, cnsK may also be a promiscuous acyltransferase that can tolerate a range of acyl groups, including acetyl-, propionyl-, and butyryl-CoA, which lead to communesins A, G and H respectively. The roles of the alpha-ketoglutarate-dependent dioxygenases cnsM and cnsP have still to be determined. In Penicillium expansum (Blue mold rot fungus), this protein is Alpha-ketoglutarate-dependent dioxygenase cnsM.